Consider the following 402-residue polypeptide: UDP-N-acetylmuramoylalanine--D-glutamate ligase (402 aa).

Position 97–103 (97–103 (GTNGKTT)) interacts with ATP.

It belongs to the MurCDEF family.

Its subcellular location is the cytoplasm. It carries out the reaction UDP-N-acetyl-alpha-D-muramoyl-L-alanine + D-glutamate + ATP = UDP-N-acetyl-alpha-D-muramoyl-L-alanyl-D-glutamate + ADP + phosphate + H(+). Its pathway is cell wall biogenesis; peptidoglycan biosynthesis. Functionally, cell wall formation. Catalyzes the addition of glutamate to the nucleotide precursor UDP-N-acetylmuramoyl-L-alanine (UMA). In Campylobacter jejuni (strain RM1221), this protein is UDP-N-acetylmuramoylalanine--D-glutamate ligase.